The primary structure comprises 191 residues: Protein GrpE (191 aa).

This sequence belongs to the GrpE family. In terms of assembly, homodimer.

It localises to the cytoplasm. Functionally, participates actively in the response to hyperosmotic and heat shock by preventing the aggregation of stress-denatured proteins, in association with DnaK and GrpE. It is the nucleotide exchange factor for DnaK and may function as a thermosensor. Unfolded proteins bind initially to DnaJ; upon interaction with the DnaJ-bound protein, DnaK hydrolyzes its bound ATP, resulting in the formation of a stable complex. GrpE releases ADP from DnaK; ATP binding to DnaK triggers the release of the substrate protein, thus completing the reaction cycle. Several rounds of ATP-dependent interactions between DnaJ, DnaK and GrpE are required for fully efficient folding. This is Protein GrpE from Listeria monocytogenes serotype 1/2a (strain 10403S).